Consider the following 1036-residue polypeptide: MMKFRFRRQGADPQREKLKQELFAFHKTVEHGFPNQPSALAFDPELRIMAIGTRSGAVKIYGAPGVEFTGLHRDAATVTQMHFLPGQGRLLTLLDDSSLHLWEIIQRNGCAHLEEGLSFHPPSRPSFDNASFPAGLTRVTVVLLAAGDTVVLGTESGSIFFLDVATLALLEGQTLSPDEVLRSVPDDYRCGKALGPVESLQGHLQDPSKILIGYSRGLLVIWSQATQSVEHVFLGNQQLESLCWGRGGSNIISSHSDGSYAIWSTDTGSPPTLQPTVVTTPYGPFPCKAINKILWRSCESGDHFIIFSGGMPRASYGDRHCVCVLRAETLVTLDFTSRVIDFFTVHSTQPEDECDNPQALAVLLEEELVVLDLQTPGWPAVPAPYLAPLHSSAITCSAHVANVPSKLWARIVSAGEQQSPQPASSALSWPITGGRNLAQEPSQRGLLLTGHEDGTVRFWDASGVALRPLYKLSTAGLFQTDCEHADSLAQAVEDDWPPFRKVGCFDPYSDDPRLGIQKVALCKYTAQMVVAGTAGQVLVLELSEVPAEHAVSVANVDLLQDREGFTWKGHERLNPHTGLLPWPAGFQPRMLIQCLPPAAVTAVTLHAEWSLVAFGTSHGFGLFDYQRKSPVLARCTLHPNDSLAMEGPLSRVKSLKKSLRQSFRRIRKSRVSGKKRTPAASSKLQEANAQLAEQTCPHDLEMTPVQRRIEPRSADDSLSGVVRCLYFADTFLRDATHHGPTMWAGTNSGSVFAYALEVPAATAGGEKRPEQAVEAVLGKEVQLMHRAPVVAIAVLDGRGRPLPEPYEASRDLAQAPDMQGGHAVLIASEEQFKVFTLPKVSAKTKFKLTAHEGCRVRKVALATFASVMSEDYAETCLACLTNLGDVHVFAVPGLRPQVHYSCIRKEDISGIASCVFTRHGQGFYLISPSEFERFSLSARNITEPLCSLDISWPQNATQPRLQESPKLSQANGTRDIILAPESCEGSPSSAHSKRADTMEPPEAALSPVSIDSAASGDTMLDTTGDVTVEYVKDFLG.

WD repeat units lie at residues 38 to 71, 78 to 119, 139 to 175, 199 to 233, 239 to 271, 289 to 331, 339 to 373, 395 to 473, 517 to 592, and 601 to 662; these read SALA…FTGL, VTQM…GLSF, VTVV…GQTL, SLQG…EHVF, LESL…GSPP, AINK…ETLV, VIDF…VLDL, TCSA…YKLS, QKVA…RMLI, and TAVT…LRQS. Ser662 carries the phosphoserine modification. A compositionally biased stretch (basic residues) spans 667-677; sequence RKSRVSGKKRT. A disordered region spans residues 667-688; that stretch reads RKSRVSGKKRTPAASSKLQEAN. Over residues 679–688 the composition is skewed to polar residues; the sequence is AASSKLQEAN. WD repeat units lie at residues 722-782, 791-843, 848-901, and 915-938; these read VRCL…KEVQ, AIAV…VSAK, LTAH…VHYS, and VFTR…SLSA. The residue at position 957 (Thr957) is a Phosphothreonine. Phosphoserine occurs at positions 964, 982, and 989. The disordered stretch occupies residues 980–1002; sequence PESCEGSPSSAHSKRADTMEPPE.

The protein belongs to the WD repeat L(2)GL family. Associated with nonmuscle myosin II heavy chain. Interacts with PRKCI/aPKC, PARD6B/Par-6 and PARD6A. Interacts with STX4A. Interacts with RAB10 (GDP-bound form); the interaction is direct and promotes RAB10 association with membranes and activation through competition with the Rab inhibitor GDI1. Interacts with DCAF1. Phosphorylated by PRKCI. As to expression, widely expressed. Expressed in brain, ovary, testis, with moderate expression in lever, uterus, lung and kidney.

It localises to the early endosome membrane. It is found in the golgi apparatus. Its subcellular location is the trans-Golgi network membrane. The protein resides in the cell projection. The protein localises to the axon. It localises to the golgi apparatus membrane. It is found in the cytoplasm. Its subcellular location is the cytoskeleton. In terms of biological role, cortical cytoskeleton protein found in a complex involved in maintaining cell polarity and epithelial integrity. Involved in the regulation of mitotic spindle orientation, proliferation, differentiation and tissue organization of neuroepithelial cells. Involved in axonogenesis through RAB10 activation thereby regulating vesicular membrane trafficking toward the axonal plasma membrane. This chain is Lethal(2) giant larvae protein homolog 1 (LLGL1), found in Bos taurus (Bovine).